Consider the following 192-residue polypeptide: Fe/S biogenesis protein NfuA (192 aa).

The [4Fe-4S] cluster site is built by cysteine 149 and cysteine 152.

It belongs to the NfuA family. Homodimer. Requires [4Fe-4S] cluster as cofactor.

In terms of biological role, involved in iron-sulfur cluster biogenesis. Binds a 4Fe-4S cluster, can transfer this cluster to apoproteins, and thereby intervenes in the maturation of Fe/S proteins. Could also act as a scaffold/chaperone for damaged Fe/S proteins. This Proteus mirabilis (strain HI4320) protein is Fe/S biogenesis protein NfuA.